The sequence spans 240 residues: Orotidine 5'-phosphate decarboxylase (240 aa).

Residues aspartate 15, lysine 37, 64–73 (DLKYHDIPNT), threonine 127, arginine 188, glutamine 197, glycine 217, and arginine 218 each bind substrate. Lysine 66 acts as the Proton donor in catalysis.

This sequence belongs to the OMP decarboxylase family. Type 1 subfamily. As to quaternary structure, homodimer.

The catalysed reaction is orotidine 5'-phosphate + H(+) = UMP + CO2. The protein operates within pyrimidine metabolism; UMP biosynthesis via de novo pathway; UMP from orotate: step 2/2. Catalyzes the decarboxylation of orotidine 5'-monophosphate (OMP) to uridine 5'-monophosphate (UMP). This Citrifermentans bemidjiense (strain ATCC BAA-1014 / DSM 16622 / JCM 12645 / Bem) (Geobacter bemidjiensis) protein is Orotidine 5'-phosphate decarboxylase.